A 341-amino-acid chain; its full sequence is Phenylalanine--tRNA ligase alpha subunit (341 aa).

Glutamate 255 is a Mg(2+) binding site.

It belongs to the class-II aminoacyl-tRNA synthetase family. Phe-tRNA synthetase alpha subunit type 1 subfamily. As to quaternary structure, tetramer of two alpha and two beta subunits. Mg(2+) serves as cofactor.

It is found in the cytoplasm. The catalysed reaction is tRNA(Phe) + L-phenylalanine + ATP = L-phenylalanyl-tRNA(Phe) + AMP + diphosphate + H(+). This is Phenylalanine--tRNA ligase alpha subunit from Natranaerobius thermophilus (strain ATCC BAA-1301 / DSM 18059 / JW/NM-WN-LF).